A 448-amino-acid polypeptide reads, in one-letter code: Exodeoxyribonuclease 7 large subunit (448 aa).

This sequence belongs to the XseA family. In terms of assembly, heterooligomer composed of large and small subunits.

Its subcellular location is the cytoplasm. The enzyme catalyses Exonucleolytic cleavage in either 5'- to 3'- or 3'- to 5'-direction to yield nucleoside 5'-phosphates.. In terms of biological role, bidirectionally degrades single-stranded DNA into large acid-insoluble oligonucleotides, which are then degraded further into small acid-soluble oligonucleotides. This chain is Exodeoxyribonuclease 7 large subunit, found in Exiguobacterium sp. (strain ATCC BAA-1283 / AT1b).